The primary structure comprises 37 residues: Large ribosomal subunit protein bL36 (37 aa).

The protein belongs to the bacterial ribosomal protein bL36 family.

In Variovorax paradoxus (strain S110), this protein is Large ribosomal subunit protein bL36.